A 156-amino-acid chain; its full sequence is Ribosome maturation factor RimP (156 aa).

Belongs to the RimP family.

The protein resides in the cytoplasm. In terms of biological role, required for maturation of 30S ribosomal subunits. The protein is Ribosome maturation factor RimP of Treponema pallidum (strain Nichols).